We begin with the raw amino-acid sequence, 246 residues long: Octanoyltransferase (246 aa).

In terms of domain architecture, BPL/LPL catalytic spans 46–234 (GTAGEMVWLV…AFEEVFGAAE (189 aa)). Residues 85-92 (RGGEYTYH), 165-167 (AIG), and 178-180 (GIA) contribute to the substrate site. Cysteine 196 serves as the catalytic Acyl-thioester intermediate.

The protein belongs to the LipB family.

The protein localises to the cytoplasm. It catalyses the reaction octanoyl-[ACP] + L-lysyl-[protein] = N(6)-octanoyl-L-lysyl-[protein] + holo-[ACP] + H(+). Its pathway is protein modification; protein lipoylation via endogenous pathway; protein N(6)-(lipoyl)lysine from octanoyl-[acyl-carrier-protein]: step 1/2. Its function is as follows. Catalyzes the transfer of endogenously produced octanoic acid from octanoyl-acyl-carrier-protein onto the lipoyl domains of lipoate-dependent enzymes. Lipoyl-ACP can also act as a substrate although octanoyl-ACP is likely to be the physiological substrate. The chain is Octanoyltransferase from Chelativorans sp. (strain BNC1).